Reading from the N-terminus, the 1034-residue chain is Putative beta-glucuronidase (1034 aa).

The active-site Proton donor is Glu-432. The region spanning 909–1034 (VDISAEEGVL…GPFIDELFID (126 aa)) is the CBM6 domain.

This sequence belongs to the glycosyl hydrolase 2 family.

The protein resides in the cytoplasm. It carries out the reaction a beta-D-glucuronoside + H2O = D-glucuronate + an alcohol. In terms of biological role, glycoside hydrolase that may be involved in ulvan degradation. Ulvan is the main polysaccharide component of the Ulvales (green seaweed) cell wall. It is composed of disaccharide building blocks comprising 3-sulfated rhamnose (Rha3S) linked to D-glucuronic acid (GlcA), L-iduronic acid (IduA), or D-xylose (Xyl). The protein is Putative beta-glucuronidase of Formosa agariphila (strain DSM 15362 / KCTC 12365 / LMG 23005 / KMM 3901 / M-2Alg 35-1).